Consider the following 78-residue polypeptide: MKLIIFTGLALLLIVSLIDVEAQNEGACLPRGSVCTTNHAGCCSKLSCDCYRRFEKGVEKGQKCWCIPTGLRYSKEKE.

A signal peptide spans Met-1–Ala-22. Residues Gln-23–Gly-26 constitute a propeptide that is removed on maturation.

The protein belongs to the neurotoxin 19 (CSTX) family. 07 (U7-Lctx) subfamily. Post-translationally, contains 4 disulfide bonds. In terms of tissue distribution, expressed by the venom gland.

The protein localises to the secreted. The sequence is that of U7-lycotoxin-Ls1a from Lycosa singoriensis (Wolf spider).